A 218-amino-acid chain; its full sequence is Small ribosomal subunit protein uS3 (218 aa).

Residues 38 to 106 (LRSDLKKKLM…PVHLNIEEVK (69 aa)) form the KH type-2 domain.

This sequence belongs to the universal ribosomal protein uS3 family. Part of the 30S ribosomal subunit. Forms a tight complex with proteins S10 and S14.

In terms of biological role, binds the lower part of the 30S subunit head. Binds mRNA in the 70S ribosome, positioning it for translation. The chain is Small ribosomal subunit protein uS3 from Legionella pneumophila (strain Lens).